The following is a 529-amino-acid chain: Delayed-rectifier potassium channel regulatory subunit KCNS1 (529 aa).

Residues 1 to 217 (MLMLLVRGTH…LTMENPGYSL (217 aa)) are Cytoplasmic-facing. Residues 218–239 (PSKLFSCVSISVVLASIAAMCI) form a helical membrane-spanning segment. Residues 240–270 (HSLPEYQAREAAAAVAAVAAGRSPEGVRDDP) lie on the Extracellular side of the membrane. Residues 271 to 293 (VLRRLEYFCIAWFSFEVSSRLLL) form a helical membrane-spanning segment. The Cytoplasmic segment spans residues 294–304 (APSTRNFFCHP). A helical membrane pass occupies residues 305-322 (LNLIDIVSVLPFYLTLLA). Topologically, residues 323–340 (GVALGDQGGTGGKELGHL) are extracellular. Residues 341–361 (GKVVQVFRLMRIFRVLKLARH) form a helical; Voltage-sensor membrane-spanning segment. Over 362-376 (STGLRSLGATLKHSY) the chain is Cytoplasmic. A helical membrane pass occupies residues 377 to 398 (REVGILLLYLAVGVSVFSGVAY). At 399 to 411 (TAEKEEDVGFNTI) the chain is on the extracellular side. An intramembrane region (helical) is located at residues 412 to 423 (PACWWWGTVSMT). The short motif at 424–429 (TVGYGD) is the Selectivity filter element. The stretch at 424–431 (TVGYGDVV) is an intramembrane region. Topologically, residues 432 to 438 (PVTVAGK) are extracellular. Residues 439 to 467 (LAASGCILGGILVVALPITIIFNKFSHFY) traverse the membrane as a helical segment. Residues 468–529 (RRQKALEAAV…PSEPPHPQMY (62 aa)) lie on the Cytoplasmic side of the membrane. Positions 494-529 (GVSEASLETSRETSQEGRSADLETQAPSEPPHPQMY) are disordered. Positions 502-514 (TSRETSQEGRSAD) are enriched in basic and acidic residues.

Belongs to the potassium channel family. S (TC 1.A.1.2) subfamily. Kv9.1/KCNS1 sub-subfamily. In terms of assembly, heterotetramer with KCNB1. Heterotetramer with KCNB2. Does not form homomultimers.

Its subcellular location is the cell membrane. In terms of biological role, potassium channel regulatory subunit that modulate the delayed rectifier voltage-gated potassium channel activity of KCNB1 and KCNB2 by altering their kinetics, expression levels, and shifting the half-inactivation potential to more polarized values. While it does not form functional channels on its own, it can form functional heterotetrameric channels with KCNB1 and KCNB2. Each regulatory subunit has unique regulatory properties that can lead to extensive inhibition, significant changes in kinetics, and/or substantial shifts in the voltage dependencies of the inactivation process. In Chlorocebus aethiops (Green monkey), this protein is Delayed-rectifier potassium channel regulatory subunit KCNS1.